A 224-amino-acid chain; its full sequence is Putative endoglucanase X (224 aa).

Residues 147–168 (QTQPTPSPSPTPTDSPLVKKGD) are disordered. Positions 162–224 (PLVKKGDVNL…SILKRILLRN (63 aa)) constitute a Dockerin domain.

It catalyses the reaction Endohydrolysis of (1-&gt;4)-beta-D-glucosidic linkages in cellulose, lichenin and cereal beta-D-glucans.. In terms of biological role, this enzyme catalyzes the endohydrolysis of 1,4-beta-glucosidic linkages in cellulose, lichenin and cereal beta-D-glucans. The chain is Putative endoglucanase X (celX) from Acetivibrio thermocellus (Hungateiclostridium thermocellum).